Consider the following 135-residue polypeptide: uncharacterized protein (135 aa).

4 helical membrane-spanning segments follow: residues 7–25, 29–51, 64–85, and 89–108; these read WSAA…EWTI, ILLT…TGNI, VFIF…EVGI, and ALIF…ISIF.

It belongs to the bacteriophage holin family. Cp-1 holin subfamily.

Its subcellular location is the cell membrane. This is an uncharacterized protein from Halalkalibacterium halodurans (strain ATCC BAA-125 / DSM 18197 / FERM 7344 / JCM 9153 / C-125) (Bacillus halodurans).